The chain runs to 195 residues: N-terminal acetyltransferase B complex catalytic subunit NAT3 (195 aa).

The 171-residue stretch at 2-172 folds into the N-acetyltransferase domain; sequence TTIQPFEPVD…DAFDMRKAMA (171 aa).

Belongs to the acetyltransferase family. GNAT subfamily. As to quaternary structure, component of the N-terminal acetyltransferase B (NatB) complex, which is composed of NAT3 and MDM20.

It localises to the cytoplasm. It catalyses the reaction N-terminal L-methionyl-L-asparaginyl-[protein] + acetyl-CoA = N-terminal N(alpha)-acetyl-L-methionyl-L-asparaginyl-[protein] + CoA + H(+). The catalysed reaction is N-terminal L-methionyl-L-glutaminyl-[protein] + acetyl-CoA = N-terminal N(alpha)-acetyl-L-methionyl-L-glutaminyl-[protein] + CoA + H(+). It carries out the reaction N-terminal L-methionyl-L-aspartyl-[protein] + acetyl-CoA = N-terminal N(alpha)-acetyl-L-methionyl-L-aspartyl-[protein] + CoA + H(+). The enzyme catalyses N-terminal L-methionyl-L-glutamyl-[protein] + acetyl-CoA = N-terminal N(alpha)-acetyl-L-methionyl-L-glutamyl-[protein] + CoA + H(+). Its function is as follows. Catalytic subunit of the NatB N-terminal acetyltransferase, which catalyzes acetylation of the amino-terminal methionine residues of all proteins beginning with Met-Asp or Met-Glu and of some proteins beginning with Met-Asn, Met-Gln or Met-Met. NatB acetylates TPM1 protein and regulates tropomyocin-actin interactions, it is presumed to N-acetylate 15% of all yeast proteins. This is N-terminal acetyltransferase B complex catalytic subunit NAT3 from Saccharomyces cerevisiae (strain ATCC 204508 / S288c) (Baker's yeast).